A 336-amino-acid polypeptide reads, in one-letter code: Dihydroorotate dehydrogenase (quinone) (336 aa).

FMN contacts are provided by residues 62 to 66 (AGLDK) and Thr-86. Lys-66 lines the substrate pocket. 111–115 (NRMGF) contributes to the substrate binding site. Residues Asn-139 and Asn-172 each coordinate FMN. Asn-172 is a binding site for substrate. Ser-175 functions as the Nucleophile in the catalytic mechanism. Asn-177 contributes to the substrate binding site. The FMN site is built by Lys-217 and Thr-245. A substrate-binding site is contributed by 246–247 (NT). FMN contacts are provided by residues Gly-268, Gly-297, and 318–319 (YT).

Belongs to the dihydroorotate dehydrogenase family. Type 2 subfamily. Monomer. The cofactor is FMN.

The protein localises to the cell membrane. It catalyses the reaction (S)-dihydroorotate + a quinone = orotate + a quinol. The protein operates within pyrimidine metabolism; UMP biosynthesis via de novo pathway; orotate from (S)-dihydroorotate (quinone route): step 1/1. Functionally, catalyzes the conversion of dihydroorotate to orotate with quinone as electron acceptor. The protein is Dihydroorotate dehydrogenase (quinone) of Vibrio parahaemolyticus serotype O3:K6 (strain RIMD 2210633).